The chain runs to 534 residues: Transcription factor RBF1 (534 aa).

Residues 1 to 36 (MSSNKNQSDLNIPTNSASLKQKQRQQLGIKSEIGAS) are disordered. Positions 77-147 (AAAAELQHRA…YQQQQQLHQL (71 aa)) form a coiled coil. Disordered regions lie at residues 262–285 (ANLYPNEKDQKRKNKPDEPGHNEE), 353–372 (QQQQQQQQHNANSQAQQQAA), 402–439 (QLSQQQSQQQQLHHIPQQRQRTQSQQSQQQPQQTPHGL), and 477–534 (TQGN…SGFL). Over residues 267 to 285 (NEKDQKRKNKPDEPGHNEE) the composition is skewed to basic and acidic residues. A coiled-coil region spans residues 332 to 386 (HHLLQQEQQQQQQQQQQQQQQQQQQQQQQHNANSQAQQQAAQLQQQMQQQLQASG). Over residues 402 to 435 (QLSQQQSQQQQLHHIPQQRQRTQSQQSQQQPQQT) the composition is skewed to low complexity.

This sequence belongs to the RBF1 family.

The protein localises to the nucleus. It is found in the chromosome. Its subcellular location is the telomere. Transcriptional activator that binds to the RPG box and to telomeres. Involved in the regulation of the transition between yeast and filamentous forms and plays a role in virulence. Induces expression of HWP1, a major hyphal cell protein and virulence factor. The polypeptide is Transcription factor RBF1 (RBF1) (Candida albicans (strain SC5314 / ATCC MYA-2876) (Yeast)).